Here is a 1072-residue protein sequence, read N- to C-terminus: DNA-directed RNA polymerase subunit beta (1072 aa).

It belongs to the RNA polymerase beta chain family. As to quaternary structure, in plastids the minimal PEP RNA polymerase catalytic core is composed of four subunits: alpha, beta, beta', and beta''. When a (nuclear-encoded) sigma factor is associated with the core the holoenzyme is formed, which can initiate transcription.

It localises to the plastid. The protein resides in the chloroplast. The enzyme catalyses RNA(n) + a ribonucleoside 5'-triphosphate = RNA(n+1) + diphosphate. In terms of biological role, DNA-dependent RNA polymerase catalyzes the transcription of DNA into RNA using the four ribonucleoside triphosphates as substrates. The protein is DNA-directed RNA polymerase subunit beta of Lobularia maritima (Sweet alyssum).